Consider the following 314-residue polypeptide: Olfactory receptor 14A2 (314 aa).

Residues 1–26 lie on the Extracellular side of the membrane; sequence MANVTLVTGFLLMGFSNIQKLRILYG. N-linked (GlcNAc...) asparagine glycosylation is present at N3. A helical membrane pass occupies residues 27–47; it reads VLFLLIYLAALMSNLLIITLI. The Cytoplasmic segment spans residues 48 to 55; it reads TLDVKLQT. The helical transmembrane segment at 56–76 threads the bilayer; sequence PMYFFLKNLSFLDVFLVSVPI. Residues 77–91 are Extracellular-facing; it reads PKFIVNNLTHNNSIS. N-linked (GlcNAc...) asparagine glycosylation is present at N83. Residues 92–112 form a helical membrane-spanning segment; it reads ILGCAFQLLLMTSFSAGEIFI. A disulfide bridge connects residues C95 and C177. The Cytoplasmic segment spans residues 113–136; the sequence is LTAMSYDRYVAICCPLNYEVIMNT. The chain crosses the membrane as a helical span at residues 137 to 157; sequence GVCVLMASVSWAIGGLFGTAY. Residues 158–193 are Extracellular-facing; it reads TAGTFSMPFCGSSVIPQFFCDVPSLLRISCSETLMV. The helical transmembrane segment at 194–214 threads the bilayer; the sequence is IYAGIGVGACLSISCFICIVI. Over 215–237 the chain is Cytoplasmic; sequence SYIYIFSTVLKIPTTKGQSKAFS. A helical transmembrane segment spans residues 238 to 258; sequence TCFPHLTVFTVFIITAYFVYL. Residues 259 to 267 lie on the Extracellular side of the membrane; that stretch reads KPPSNSPSV. The helical transmembrane segment at 268–290 threads the bilayer; that stretch reads IDRLLSVIYTVMPPVFNPVTYSL. Residues 291-314 lie on the Cytoplasmic side of the membrane; it reads RNNDMKCALIRLLQKTYGQEAYFI.

It belongs to the G-protein coupled receptor 1 family.

The protein localises to the cell membrane. Odorant receptor. The chain is Olfactory receptor 14A2 (OR14A2) from Homo sapiens (Human).